Consider the following 158-residue polypeptide: Putative 8-oxo-dGTP diphosphatase YtkD (158 aa).

The region spanning 6–145 (DYYQNTVQLS…SFIMKDSVLP (140 aa)) is the Nudix hydrolase domain. Residues 53 to 74 (GKVEPMECAEEAALREVKEETG) carry the Nudix box motif. Residues glutamate 68 and glutamate 72 each contribute to the Mg(2+) site.

The protein belongs to the Nudix hydrolase family. Mg(2+) serves as cofactor.

It catalyses the reaction 8-oxo-dGTP + H2O = 8-oxo-dGMP + diphosphate + H(+). With respect to regulation, not induced by oxidative damage (following treatment with paraquat or hydrogen peroxide). Not induced by mitomycin C. Not induced by sigma-B general stress inducers such as sodium chloride, ethanol or heat. In terms of biological role, involved in the GO system responsible for removing an oxidatively damaged form of guanine (7,8-dihydro-8-oxoguanine, 8-oxo-dGTP) from DNA and the nucleotide pool. 8-oxo-dGTP is inserted opposite dA and dC residues of template DNA with almost equal efficiency thus leading to A.T to G.C transversions. Functions, in conjunction with MutT, to protect vegetatively growing cells from DNA-damaging agents such as H(2)O(2) or t-BHP (t-butylhydroperoxide). The 2 proteins do not however protect spores. According to PubMed:15576788, phosphohydrolase that catalyzes the hydrolysis of all common nucleoside triphosphates as well as of the mutagenic analog 8-oxo-dGTP. The high catalytic efficiency on dGTP is in contrast to results from PubMed:14761999. According to PubMed:14761999, catalyzes the hydrolysis of 8-oxo-dGTP with a specific activity 413 times higher than that exhibited against dGTP. Preferentially catalyzes the hydrolysis of 8-oxo-dGTP and 8-oxo-GTP. According to PubMed:15576788, hydrolyzes nucleoside triphosphates in a stepwise fashion through the diphosphate to the monophosphate, releasing two molecules of inorganic orthophosphate. The chain is Putative 8-oxo-dGTP diphosphatase YtkD (ytkD) from Bacillus subtilis (strain 168).